A 158-amino-acid chain; its full sequence is NAD(P)H-quinone oxidoreductase subunit O, chloroplastic (158 aa).

Residues Met1–Lys38 constitute a chloroplast transit peptide. Residues Pro33–Lys70 are disordered. The span at Ala56–Lys70 shows a compositional bias: low complexity.

Belongs to the NDH complex subunit O family. Part of the chloroplast NDH complex, composed of a mixture of chloroplast and nucleus encoded subunits. Component of the NDH subcomplex A, at least composed of ndhH, ndhI, ndhJ, ndhK, ndhL, ndhM, ndhN and ndhO.

The protein resides in the plastid. It localises to the chloroplast thylakoid membrane. It catalyses the reaction a plastoquinone + NADH + (n+1) H(+)(in) = a plastoquinol + NAD(+) + n H(+)(out). The enzyme catalyses a plastoquinone + NADPH + (n+1) H(+)(in) = a plastoquinol + NADP(+) + n H(+)(out). NDH shuttles electrons from NAD(P)H:plastoquinone, via FMN and iron-sulfur (Fe-S) centers, to quinones in the photosynthetic chain and possibly in a chloroplast respiratory chain. The immediate electron acceptor for the enzyme in this species is believed to be plastoquinone. Couples the redox reaction to proton translocation, and thus conserves the redox energy in a proton gradient. In Arabidopsis thaliana (Mouse-ear cress), this protein is NAD(P)H-quinone oxidoreductase subunit O, chloroplastic.